Here is a 476-residue protein sequence, read N- to C-terminus: Aspartyl/glutamyl-tRNA(Asn/Gln) amidotransferase subunit B (476 aa).

Belongs to the GatB/GatE family. GatB subfamily. In terms of assembly, heterotrimer of A, B and C subunits.

It catalyses the reaction L-glutamyl-tRNA(Gln) + L-glutamine + ATP + H2O = L-glutaminyl-tRNA(Gln) + L-glutamate + ADP + phosphate + H(+). It carries out the reaction L-aspartyl-tRNA(Asn) + L-glutamine + ATP + H2O = L-asparaginyl-tRNA(Asn) + L-glutamate + ADP + phosphate + 2 H(+). Its function is as follows. Allows the formation of correctly charged Asn-tRNA(Asn) or Gln-tRNA(Gln) through the transamidation of misacylated Asp-tRNA(Asn) or Glu-tRNA(Gln) in organisms which lack either or both of asparaginyl-tRNA or glutaminyl-tRNA synthetases. The reaction takes place in the presence of glutamine and ATP through an activated phospho-Asp-tRNA(Asn) or phospho-Glu-tRNA(Gln). The sequence is that of Aspartyl/glutamyl-tRNA(Asn/Gln) amidotransferase subunit B from Listeria monocytogenes serovar 1/2a (strain ATCC BAA-679 / EGD-e).